Consider the following 396-residue polypeptide: Metallophosphoesterase 1 (396 aa).

A helical membrane pass occupies residues T28–F48. A divalent metal cation is bound by residues D75, D117, N155, H249, H303, and H305. The chain crosses the membrane as a helical span at residues T356–F376.

It belongs to the metallophosphoesterase superfamily. MPPE1 family. In terms of assembly, interacts with GPI-anchor proteins (via the GPI portion). Interacts with TMED10. Requires Mn(2+) as cofactor.

Its subcellular location is the endoplasmic reticulum-Golgi intermediate compartment membrane. Its function is as follows. Metallophosphoesterase that catalyzes the removal of a side-chain ethanolamine-phosphate (EtNP) from the second mannose of the GPI-anchor protein intermediate. Participates in the glycan remodeling steps of GPI-anchor maturation to allow an efficient transport of GPI-anchor proteins from the endoplasmic reticulum to the Golgi. In Mus musculus (Mouse), this protein is Metallophosphoesterase 1.